Consider the following 209-residue polypeptide: Small ribosomal subunit protein uS5 (209 aa).

Residues 1 to 11 (MTQPNTQTTPN) show a composition bias toward polar residues. Positions 1 to 55 (MTQPNTQTTPNDVPAAAEGQQEQQQQQRRGGGRERRGGGRRGDRRGQERDSEWQE) are disordered. Positions 18–28 (EGQQEQQQQQR) are enriched in low complexity. Over residues 31–55 (GGRERRGGGRRGDRRGQERDSEWQE) the composition is skewed to basic and acidic residues. Residues 53–116 (WQERVVQIRR…ADGKKHLVKV (64 aa)) enclose the S5 DRBM domain.

The protein belongs to the universal ribosomal protein uS5 family. As to quaternary structure, part of the 30S ribosomal subunit. Contacts proteins S4 and S8.

In terms of biological role, with S4 and S12 plays an important role in translational accuracy. Functionally, located at the back of the 30S subunit body where it stabilizes the conformation of the head with respect to the body. The protein is Small ribosomal subunit protein uS5 of Prochlorococcus marinus (strain MIT 9313).